Reading from the N-terminus, the 201-residue chain is UPF0637 protein LCA_0842 (201 aa).

Belongs to the UPF0637 family.

This Latilactobacillus sakei subsp. sakei (strain 23K) (Lactobacillus sakei subsp. sakei) protein is UPF0637 protein LCA_0842.